A 186-amino-acid polypeptide reads, in one-letter code: MSVREVIQKNEAKLKKSIEAFQHEIASIRTGKATTALLDRVKVEAYGQLMPLKQVGNIGVADVHTLMVQVWDKGMVGPAEKAIRDANLGLNPVAEGQSIRVSIPPLTEERRKEFVKLTRKFGEDSKVSLRNLRRDMIQEIEKLEKEKTIGEDEKNRGKKDADELLHKYEKQINELISHKEKEIMEV.

The protein belongs to the RRF family.

It is found in the cytoplasm. In terms of biological role, responsible for the release of ribosomes from messenger RNA at the termination of protein biosynthesis. May increase the efficiency of translation by recycling ribosomes from one round of translation to another. The polypeptide is Ribosome-recycling factor (Chlorobium phaeovibrioides (strain DSM 265 / 1930) (Prosthecochloris vibrioformis (strain DSM 265))).